We begin with the raw amino-acid sequence, 90 residues long: Probable Fe(2+)-trafficking protein (90 aa).

Belongs to the Fe(2+)-trafficking protein family.

Could be a mediator in iron transactions between iron acquisition and iron-requiring processes, such as synthesis and/or repair of Fe-S clusters in biosynthetic enzymes. This is Probable Fe(2+)-trafficking protein from Polynucleobacter asymbioticus (strain DSM 18221 / CIP 109841 / QLW-P1DMWA-1) (Polynucleobacter necessarius subsp. asymbioticus).